A 3166-amino-acid polypeptide reads, in one-letter code: Intermembrane lipid transfer protein VPS13A (3166 aa).

Residues 3-116 form the Chorein N-terminal domain; it reads FESVVVEVLN…LMETKQQELK (114 aa). 2 TPR repeats span residues 212–245 and 373–406; these read LFAYWNVNSEMFYLNDYDESLKALKNGIVNENIV and LTSKKPSPEILMSLEELEKTLDVFNITIARQQAE. Threonine 831 carries the phosphothreonine modification. Serine 835 is subject to Phosphoserine. Residues 838-844 carry the FFAT motif; that stretch reads EFFDAPC. Residues 1343 to 1359 show a composition bias toward polar residues; sequence APSSANKDPETMTSGVT. The segment at 1343 to 1365 is disordered; sequence APSSANKDPETMTSGVTSPPDHS. A Phosphoserine modification is found at serine 1410. TPR repeat units follow at residues 1806–1840 and 1999–2034; these read AIVESDSEAENYKVPEYKTAISFYSRDQLNITLSK and ISVFEGDTLLGIASPENEFNIPLASYRSSLSLVPED. The SHR-BD domain occupies 2202-2447; it reads VAFHSPYWMV…VYYTWADPVG (246 aa). Required for mitochondrial localization stretches follow at residues 2607–3166 and 2743–3166; these read LQPH…SPRL and EYEV…SPRL. TPR repeat units lie at residues 2716–2750 and 2852–2890; these read ADLVTKAEVTEKTEVEHFHKDVEAFEQEYEVVSSV and ILGLDVLGNPFGLIREFSEGVEAFFYEPYQGAIQGPEEF. Residues 2945 to 3019 are required for lipid droplet localization; sequence PAGLREGITR…SSTFQGIKRA (75 aa).

This sequence belongs to the VPS13 family. In terms of assembly, interacts (via FFAT motif) with VAPA and VAPB. Interacts with RAB7A. Interacts with XK.

The protein resides in the mitochondrion outer membrane. It is found in the endoplasmic reticulum membrane. It localises to the endosome membrane. The protein localises to the lysosome membrane. Its subcellular location is the lipid droplet. The protein resides in the golgi apparatus. It is found in the cytoplasmic vesicle. It localises to the secretory vesicle. The protein localises to the neuronal dense core vesicle. Functionally, mediates the transfer of lipids between membranes at organelle contact sites. Required for the formation or stabilization of ER-mitochondria contact sites which enable transfer of lipids between the ER and mitochondria. Negatively regulates lipid droplet size and motility. Required for efficient lysosomal protein degradation. The polypeptide is Intermembrane lipid transfer protein VPS13A (Mus musculus (Mouse)).